We begin with the raw amino-acid sequence, 2346 residues long: Acetyl-CoA carboxylase 1 (2346 aa).

M1 bears the N-acetylmethionine mark. Residues S5, S23, S25, S29, S34, S48, S50, and S53 each carry the phosphoserine modification. T58 carries the phosphothreonine modification. S78 carries the post-translational modification Phosphoserine. S80 carries the phosphoserine; by AMPK modification. Residues 117–618 enclose the Biotin carboxylation domain; sequence VIEKVLIANN…GTGWLDRLIA (502 aa). One can recognise an ATP-grasp domain in the interval 275–466; the sequence is SKRILNVPQE…LPAAQLQIAM (192 aa). Position 315-320 (315-320) interacts with ATP; sequence GGGGKG. E424, E437, and N439 together coordinate Mg(2+). Residues E424, E437, and N439 each coordinate Mn(2+). Residue R441 is part of the active site. T610 carries the phosphothreonine modification. The 75-residue stretch at 745 to 819 folds into the Biotinyl-binding domain; sequence FEKENDPSVL…DPGCVIAKMQ (75 aa). The residue at position 786 (K786) is an N6-biotinyllysine. Phosphoserine occurs at positions 835, 1201, 1216, and 1218. T1227 carries the post-translational modification Phosphothreonine. Phosphoserine occurs at positions 1259, 1263, and 1273. K1334 is subject to N6-acetyllysine. Residues 1576–1914 enclose the CoA carboxyltransferase N-terminal domain; that stretch reads PYVTKDQLQS…SVYSSVPLLN (339 aa). Positions 1576–2234 are carboxyltransferase; the sequence is PYVTKDQLQS…EDLVKKKIHN (659 aa). R1823, K2127, and R2129 together coordinate CoA. The CoA carboxyltransferase C-terminal domain maps to 1918-2234; the sequence is PIDRVIEFVP…EDLVKKKIHN (317 aa). The residue at position 2153 (T2153) is a Phosphothreonine.

As to quaternary structure, monomer, homodimer, and homotetramer. Can form filamentous polymers. Interacts in its inactive phosphorylated form with the BRCT domains of BRCA1 which prevents ACACA dephosphorylation and inhibits lipid synthesis. Interacts with MID1IP1; interaction with MID1IP1 promotes oligomerization and increases its activity. Requires Mg(2+) as cofactor. The cofactor is Mn(2+). It depends on biotin as a cofactor. Phosphorylation on Ser-1263 is required for interaction with BRCA1. Post-translationally, phosphorylation at Ser-80 by AMPK inactivates enzyme activity. In terms of processing, the biotin cofactor is covalently attached to the central biotinyl-binding domain and is required for the catalytic activity.

The protein localises to the cytoplasm. It is found in the cytosol. It carries out the reaction hydrogencarbonate + acetyl-CoA + ATP = malonyl-CoA + ADP + phosphate + H(+). It participates in lipid metabolism; malonyl-CoA biosynthesis; malonyl-CoA from acetyl-CoA: step 1/1. Its activity is regulated as follows. Inhibited by phosphorylation. Citrate promotes oligomerization of the protein into filaments that correspond to the most active form of the carboxylase. Cytosolic enzyme that catalyzes the carboxylation of acetyl-CoA to malonyl-CoA, the first and rate-limiting step of de novo fatty acid biosynthesis. This is a 2 steps reaction starting with the ATP-dependent carboxylation of the biotin carried by the biotin carboxyl carrier (BCC) domain followed by the transfer of the carboxyl group from carboxylated biotin to acetyl-CoA. This Bos taurus (Bovine) protein is Acetyl-CoA carboxylase 1.